The sequence spans 160 residues: Phosphopantetheine adenylyltransferase (160 aa).

Residue Thr11 participates in substrate binding. ATP contacts are provided by residues 11–12 (TF) and His19. Positions 43, 75, and 89 each coordinate substrate. ATP is bound by residues 90–92 (GLR), Glu100, and 125–131 (YSFLSSS).

The protein belongs to the bacterial CoaD family. Homohexamer. The cofactor is Mg(2+).

The protein localises to the cytoplasm. The catalysed reaction is (R)-4'-phosphopantetheine + ATP + H(+) = 3'-dephospho-CoA + diphosphate. It participates in cofactor biosynthesis; coenzyme A biosynthesis; CoA from (R)-pantothenate: step 4/5. Reversibly transfers an adenylyl group from ATP to 4'-phosphopantetheine, yielding dephospho-CoA (dPCoA) and pyrophosphate. The polypeptide is Phosphopantetheine adenylyltransferase (Listeria monocytogenes serotype 4b (strain CLIP80459)).